Reading from the N-terminus, the 1238-residue chain is Lysine-specific demethylase JMJ703 (1238 aa).

The tract at residues 56–79 (EECQPSAAVSRSDTPCSTSGTQTC) is disordered. The segment covering 62-79 (AAVSRSDTPCSTSGTQTC) has biased composition (polar residues). The region spanning 154–195 (APVFYPTEEEFEDTLKYIESIRPMAEPYGICRIVPPSSWKPP) is the JmjN domain. The interval 215–266 (KVDKLQNRKSSKKGRRGGMMKRRKLAESEENSATAHTQTGMQQSPERFGFEP) is disordered. The segment covering 221–238 (NRKSSKKGRRGGMMKRRK) has biased composition (basic residues). Residues 245–259 (NSATAHTQTGMQQSP) are compositionally biased toward polar residues. Positions 348-514 (KYAQSGWNLN…IGHNAVELYR (167 aa)) constitute a JmjC domain. Fe cation is bound by residues His394, Glu396, and His482. Disordered regions lie at residues 699–725 (GPRRSYMSQASAVSLVSSSTSNEQKDE), 777–798 (YNGGLGGHKGSAPGLPVSSSPS), 834–863 (TGDSRSLLGEHHNRSPAMIHDGTNMKSSLE), and 910–978 (ASSQ…LQRT). The span at 706 to 719 (SQASAVSLVSSSTS) shows a compositional bias: low complexity. The segment covering 910 to 923 (ASSQQFVRTGPWTQ) has biased composition (polar residues). Positions 924–936 (SASHEASSPSTSA) are enriched in low complexity. Polar residues predominate over residues 964–978 (SFSNQQPNDGRLQRT). The FYR N-terminal domain occupies 1019 to 1077 (VVHRFKCSVEPLEIGVVLSGRLWSSSQAIFPKGFRSRVKYFSIVDPIQMAYYISEILDA). An FYR C-terminal domain is found at 1079–1169 (MQGPLFMVKL…HICTEYWRSR (91 aa)).

The cofactor is Fe(2+). As to expression, expressed in roots, leaf sheaths, stems and panicles.

Its subcellular location is the nucleus. It carries out the reaction N(6),N(6),N(6)-trimethyl-L-lysyl(4)-[histone H3] + 3 2-oxoglutarate + 3 O2 = L-lysyl(4)-[histone H3] + 3 formaldehyde + 3 succinate + 3 CO2. Functionally, histone demethylase that demethylates 'Lys-4' (H3K4me) of histone H3 with a specific activity for H3K4me3, H3K4me2 and H3K4me1. No activity on H3K9me3/2/1, H3K27me3/2/1 and H3K36me3/2/1. Involved in the control of stem elongation by regulating methylation states of H3K4me3 on cytokinin oxidase (CKX) gene family, which may cause increased expression of CKX genes and reduced cytokinin levels. Prevents ectopic retrotransposition by regulating the levels of H3K4me3 in two non-LTR retrotransposons KARMA and LINE-1 (L1) and reinforcing their repressed states. This is Lysine-specific demethylase JMJ703 (JMJ703) from Oryza sativa subsp. japonica (Rice).